The primary structure comprises 544 residues: Chaperonin GroEL 1 (544 aa).

Residues 29–32 (TLGP), 86–90 (DGTTT), Gly-413, and Asp-495 each bind ATP. The tract at residues 525 to 544 (PEPKTNTPASSGSGMSDYDY) is disordered. Residues 528 to 538 (KTNTPASSGSG) show a composition bias toward polar residues.

It belongs to the chaperonin (HSP60) family. In terms of assembly, forms a cylinder of 14 subunits composed of two heptameric rings stacked back-to-back. Interacts with the co-chaperonin GroES.

The protein resides in the cytoplasm. It carries out the reaction ATP + H2O + a folded polypeptide = ADP + phosphate + an unfolded polypeptide.. In terms of biological role, together with its co-chaperonin GroES, plays an essential role in assisting protein folding. The GroEL-GroES system forms a nano-cage that allows encapsulation of the non-native substrate proteins and provides a physical environment optimized to promote and accelerate protein folding. This is Chaperonin GroEL 1 from Synechococcus sp. (strain JA-2-3B'a(2-13)) (Cyanobacteria bacterium Yellowstone B-Prime).